A 417-amino-acid chain; its full sequence is Cobalamin binding intrinsic factor (417 aa).

A signal peptide spans 1–18 (MAWLTLYLLSVLWAVAGT). Intrachain disulfides connect cysteine 26–cysteine 246, cysteine 103–cysteine 288, and cysteine 143–cysteine 182. Cob(II)alamin is bound at residue aspartate 171. Phosphoserine is present on serine 191. Cob(II)alamin contacts are provided by aspartate 222 and glutamine 270. N-linked (GlcNAc...) asparagine glycans are attached at residues asparagine 311 and asparagine 330. Cob(II)alamin contacts are provided by residues 365–370 (SWGLIV) and 386–395 (WEFLSGKTPL). Asparagine 413 is a glycosylation site (N-linked (GlcNAc...) asparagine).

Belongs to the eukaryotic cobalamin transport proteins family. Interacts with CUBN (via CUB domains). Gastric mucosa.

The protein localises to the secreted. Functionally, promotes absorption of the essential vitamin cobalamin (Cbl) in the ileum. After interaction with CUBN, the CBLIF-cobalamin complex is internalized via receptor-mediated endocytosis. The chain is Cobalamin binding intrinsic factor (Cblif) from Mus musculus (Mouse).